A 365-amino-acid polypeptide reads, in one-letter code: Glycosyltransferase 8 domain-containing protein 1 (365 aa).

Topologically, residues 1–4 (MTVR) are cytoplasmic. A helical; Signal-anchor for type II membrane protein transmembrane segment spans residues 5-22 (RVNVVILVLLVVAFLIVL). At 23–365 (HRNLLNLNDF…HPIRKHVEEK (343 aa)) the chain is on the lumenal side. N-linked (GlcNAc...) asparagine glycosylation is found at Asn-102, Asn-181, Asn-245, and Asn-253.

Belongs to the glycosyltransferase 8 family.

It is found in the membrane. The chain is Glycosyltransferase 8 domain-containing protein 1 (glt8d1) from Danio rerio (Zebrafish).